Consider the following 424-residue polypeptide: Catabolic NAD-specific glutamate dehydrogenase RocG (424 aa).

Residues lysine 80 and lysine 104 each coordinate substrate. Catalysis depends on lysine 116, which acts as the Proton donor. Residues threonine 200 and asparagine 231 each contribute to the NAD(+) site. Serine 358 contacts substrate.

Belongs to the Glu/Leu/Phe/Val dehydrogenases family. As to quaternary structure, homohexamer. Interacts with transcriptional regulator GltC.

It carries out the reaction L-glutamate + NAD(+) + H2O = 2-oxoglutarate + NH4(+) + NADH + H(+). Devoted to catabolic function of glutamate (and other amino acids of the glutamate family) utilization as sole nitrogen source. It is not involved in anabolic function of glutamate biosynthesis since B.subtilis possesses only one route of glutamate biosynthesis from ammonia, catalyzed by glutamate synthase. Wild-type cells are unable to utilize glutamate or glutamine as a sole carbon source; thus RocG does not function physiologically to synthesize glutamate, but it is involved in the utilization of arginine, and proline as carbon or nitrogen source. The catabolic RocG is essential for controlling gltAB expression via an inhibitory interactions with the transcriptional regulator GltC in response to the availability of sugars. The chain is Catabolic NAD-specific glutamate dehydrogenase RocG from Bacillus subtilis (strain 168).